Consider the following 103-residue polypeptide: Large ribosomal subunit protein bL21 (103 aa).

Belongs to the bacterial ribosomal protein bL21 family. As to quaternary structure, part of the 50S ribosomal subunit. Contacts protein L20.

This protein binds to 23S rRNA in the presence of protein L20. The sequence is that of Large ribosomal subunit protein bL21 from Parvibaculum lavamentivorans (strain DS-1 / DSM 13023 / NCIMB 13966).